Reading from the N-terminus, the 38-residue chain is Large ribosomal subunit protein bL36 (38 aa).

This sequence belongs to the bacterial ribosomal protein bL36 family.

The sequence is that of Large ribosomal subunit protein bL36 from Roseiflexus castenholzii (strain DSM 13941 / HLO8).